The chain runs to 207 residues: Fibronectin type III domain-containing protein 5b (207 aa).

An N-terminal signal peptide occupies residues 1 to 26 (MWGIKGSFAVLLLLFLAYIFASSVNA). Over 27–146 (DSLSAPLNVT…EEVGQAAQLR (120 aa)) the chain is Extracellular. Residues 31-122 (APLNVTIKAL…EPVLFRTPKE (92 aa)) form the Fibronectin type-III domain. N-linked (GlcNAc...) asparagine glycans are attached at residues asparagine 34 and asparagine 79. The chain crosses the membrane as a helical span at residues 147-167 (AGELIIIVVVLVMWAGVIALF). Residues 168 to 207 (CRQYDIIKDNEPNNNKDKAKNSSECSTPEHPTGGLLRSKV) are Cytoplasmic-facing. The span at 178–188 (EPNNNKDKAKN) shows a compositional bias: basic and acidic residues. Positions 178-207 (EPNNNKDKAKNSSECSTPEHPTGGLLRSKV) are disordered. The short motif at 205–207 (SKV) is the Microbody targeting signal element.

Dimer; may exist in other oligomeric forms. In terms of processing, the extracellular domain is cleaved and released from the cell membrane.

The protein resides in the cell membrane. Its subcellular location is the peroxisome membrane. It is found in the secreted. Its function is as follows. May mediate beneficial effects of muscular exercise. This chain is Fibronectin type III domain-containing protein 5b (fndc5b), found in Danio rerio (Zebrafish).